Reading from the N-terminus, the 357-residue chain is Sorbitol dehydrogenase (357 aa).

At A2 the chain carries N-acetylalanine. Position 45 (C45) interacts with Zn(2+). Y51 serves as a coordination point for substrate. Zn(2+) contacts are provided by H70 and E71. E156 lines the substrate pocket. Residues I184, D204, and R209 each contribute to the NAD(+) site. S211 and S225 each carry phosphoserine. NAD(+) is bound by residues 273-275 (VGL) and 297-299 (VFR). Substrate contacts are provided by R299 and Y300.

Belongs to the zinc-containing alcohol dehydrogenase family. In terms of assembly, homotetramer. Zn(2+) serves as cofactor.

Its subcellular location is the mitochondrion membrane. It is found in the cell projection. It localises to the cilium. The protein localises to the flagellum. It catalyses the reaction xylitol + NAD(+) = D-xylulose + NADH + H(+). The enzyme catalyses L-iditol + NAD(+) = keto-L-sorbose + NADH + H(+). The catalysed reaction is keto-D-fructose + NADH + H(+) = D-sorbitol + NAD(+). Polyol dehydrogenase that catalyzes the reversible NAD(+)-dependent oxidation of various sugar alcohols. Is active with xylitol, L-iditol and D-sorbitol (D-glucitol) as substrates, leading to the C2-oxidized products D-xylulose, L-sorbose and D-fructose, respectively. Is a key enzyme in the polyol pathway that interconverts glucose and fructose via sorbitol, which constitutes an important alternate route for glucose metabolism. May play a role in sperm motility by using sorbitol as an alternative energy source for sperm motility. The polypeptide is Sorbitol dehydrogenase (SORD) (Pongo abelii (Sumatran orangutan)).